Here is a 251-residue protein sequence, read N- to C-terminus: Demethylmenaquinone methyltransferase (251 aa).

Residues threonine 66, aspartate 87, and 115 to 116 (NA) contribute to the S-adenosyl-L-methionine site.

It belongs to the class I-like SAM-binding methyltransferase superfamily. MenG/UbiE family.

The enzyme catalyses a 2-demethylmenaquinol + S-adenosyl-L-methionine = a menaquinol + S-adenosyl-L-homocysteine + H(+). The protein operates within quinol/quinone metabolism; menaquinone biosynthesis; menaquinol from 1,4-dihydroxy-2-naphthoate: step 2/2. Its function is as follows. Methyltransferase required for the conversion of demethylmenaquinol (DMKH2) to menaquinol (MKH2). In Symbiobacterium thermophilum (strain DSM 24528 / JCM 14929 / IAM 14863 / T), this protein is Demethylmenaquinone methyltransferase.